Reading from the N-terminus, the 562-residue chain is Isochorismate synthase 2, chloroplastic (562 aa).

The N-terminal 55 residues, 1-55, are a transit peptide targeting the chloroplast; it reads MASLQCSFHFLGTNPKKYNPSSIFQSYSRTSFTKLSSRVSRQRFLRCTLSMNGCE.

This sequence belongs to the isochorismate synthase family. Mg(2+) is required as a cofactor.

Its subcellular location is the plastid. The protein localises to the chloroplast. The catalysed reaction is chorismate = isochorismate. Its pathway is siderophore biosynthesis; salicylate biosynthesis. Its function is as follows. Isochorismate synthase involved in the synthesis of salicylic acid (SA) required for both local and systemic acquired resistance (LAR and SAR) while SA synthesized through the phenylalanine ammonium lyase (PAL) pathway seems to potentiate plant cell death. Also involved in phylloquinone (vitamin K1) synthesis. Has no isochorismate pyruvate lyase (IPL) activity. This chain is Isochorismate synthase 2, chloroplastic (ICS2), found in Arabidopsis thaliana (Mouse-ear cress).